Consider the following 114-residue polypeptide: Large ribosomal subunit protein bL19 (114 aa).

Belongs to the bacterial ribosomal protein bL19 family.

This protein is located at the 30S-50S ribosomal subunit interface and may play a role in the structure and function of the aminoacyl-tRNA binding site. The sequence is that of Large ribosomal subunit protein bL19 from Listeria welshimeri serovar 6b (strain ATCC 35897 / DSM 20650 / CCUG 15529 / CIP 8149 / NCTC 11857 / SLCC 5334 / V8).